A 328-amino-acid polypeptide reads, in one-letter code: Phenylalanine--tRNA ligase alpha subunit (328 aa).

Glutamate 245 lines the Mg(2+) pocket.

Belongs to the class-II aminoacyl-tRNA synthetase family. Phe-tRNA synthetase alpha subunit type 1 subfamily. In terms of assembly, tetramer of two alpha and two beta subunits. Requires Mg(2+) as cofactor.

The protein localises to the cytoplasm. It carries out the reaction tRNA(Phe) + L-phenylalanine + ATP = L-phenylalanyl-tRNA(Phe) + AMP + diphosphate + H(+). This Helicobacter pylori (strain P12) protein is Phenylalanine--tRNA ligase alpha subunit.